Consider the following 366-residue polypeptide: Chorismate synthase (366 aa).

NADP(+)-binding residues include R48 and R54. FMN is bound by residues 125-127, 238-239, G278, 293-297, and R319; these read RSS, NA, and KPTSS.

Belongs to the chorismate synthase family. In terms of assembly, homotetramer. FMNH2 is required as a cofactor.

It carries out the reaction 5-O-(1-carboxyvinyl)-3-phosphoshikimate = chorismate + phosphate. Its pathway is metabolic intermediate biosynthesis; chorismate biosynthesis; chorismate from D-erythrose 4-phosphate and phosphoenolpyruvate: step 7/7. Functionally, catalyzes the anti-1,4-elimination of the C-3 phosphate and the C-6 proR hydrogen from 5-enolpyruvylshikimate-3-phosphate (EPSP) to yield chorismate, which is the branch point compound that serves as the starting substrate for the three terminal pathways of aromatic amino acid biosynthesis. This reaction introduces a second double bond into the aromatic ring system. The protein is Chorismate synthase of Ralstonia nicotianae (strain ATCC BAA-1114 / GMI1000) (Ralstonia solanacearum).